A 1045-amino-acid polypeptide reads, in one-letter code: Fibrosin-1-like protein (1045 aa).

The segment covering 1–12 has biased composition (basic residues); the sequence is MEAKVRPSRRSR. Disordered stretches follow at residues 1 to 86 and 99 to 315; these read MEAK…DGFA and DMAL…THVP. Basic and acidic residues predominate over residues 13–28; sequence AQRDRGRRREAARDAR. Over residues 48–63 the composition is skewed to low complexity; the sequence is GLRGAPPRGAAPAPRT. Residues 99–123 are compositionally biased toward basic and acidic residues; it reads DMALKPHERKEKWERRLIKKPRESE. Residues 183–197 show a composition bias toward polar residues; the sequence is EATSSRDPLSDSSAH. Pro residues predominate over residues 270–280; that stretch reads HAAPCPGPPPG. The residue at position 340 (Ser340) is a Phosphoserine. The segment covering 443–457 has biased composition (basic residues); that stretch reads QHTHQHTHQHTHQHQ. Disordered regions lie at residues 443-462 and 719-753; these read QHTHQHTHQHTHQHQHTFAP and EGSSVHGLPSPHEAWNRLHRAPPSFPAPPPWPKSV. The span at 741 to 750 shows a compositional bias: pro residues; the sequence is PSFPAPPPWP. Position 790 is a phosphoserine (Ser790). 2 disordered regions span residues 809–880 and 910–961; these read ELGR…APLQ and AAAP…PALD. The span at 817–837 shows a compositional bias: basic and acidic residues; sequence AEREAEPRVKESRSPAKEEAA. Lys858 participates in a covalent cross-link: Glycyl lysine isopeptide (Lys-Gly) (interchain with G-Cter in SUMO2). Over residues 910 to 922 the composition is skewed to low complexity; sequence AAAPAPGSAALLE. Over residues 923–949 the composition is skewed to basic and acidic residues; sequence PPERPYRDREPHGYSPERLRGELERAR. Phosphoserine is present on residues Ser937 and Ser977. Phosphothreonine occurs at positions 989 and 1010. Residues 991–1045 form a disordered region; it reads PAAAALGAPPPLVTAAGPPTPPGPPRSRTTPLGGLGPGEARDYSPSRNPPEVEAR. The segment covering 998 to 1015 has biased composition (pro residues); it reads APPPLVTAAGPPTPPGPP. The span at 1029-1045 shows a compositional bias: basic and acidic residues; sequence EARDYSPSRNPPEVEAR.

Belongs to the AUTS2 family.

This Homo sapiens (Human) protein is Fibrosin-1-like protein (FBRSL1).